Consider the following 383-residue polypeptide: tRNA(Met) cytidine acetate ligase (383 aa).

Residues 7 to 20, Gly-101, Asn-150, and Arg-175 contribute to the ATP site; that span reads ITEY…HRYH.

Belongs to the TmcAL family.

The protein resides in the cytoplasm. It carries out the reaction cytidine(34) in elongator tRNA(Met) + acetate + ATP = N(4)-acetylcytidine(34) in elongator tRNA(Met) + AMP + diphosphate. Functionally, catalyzes the formation of N(4)-acetylcytidine (ac(4)C) at the wobble position of elongator tRNA(Met), using acetate and ATP as substrates. First activates an acetate ion to form acetyladenylate (Ac-AMP) and then transfers the acetyl group to tRNA to form ac(4)C34. The polypeptide is tRNA(Met) cytidine acetate ligase (Lactiplantibacillus plantarum (strain ATCC BAA-793 / NCIMB 8826 / WCFS1) (Lactobacillus plantarum)).